The primary structure comprises 1389 residues: DNA-directed RNA polymerase subunit beta (1389 aa).

This sequence belongs to the RNA polymerase beta chain family. As to quaternary structure, in plastids the minimal PEP RNA polymerase catalytic core is composed of four subunits: alpha, beta, beta', and beta''. When a (nuclear-encoded) sigma factor is associated with the core the holoenzyme is formed, which can initiate transcription.

Its subcellular location is the plastid. It is found in the chloroplast. It catalyses the reaction RNA(n) + a ribonucleoside 5'-triphosphate = RNA(n+1) + diphosphate. Functionally, DNA-dependent RNA polymerase catalyzes the transcription of DNA into RNA using the four ribonucleoside triphosphates as substrates. This Phaeodactylum tricornutum (strain CCAP 1055/1) protein is DNA-directed RNA polymerase subunit beta.